The sequence spans 658 residues: Exoribonuclease 2 (658 aa).

In terms of domain architecture, RNB spans 189 to 530; it reads REDLTSLYFT…VNHRLIKQVL (342 aa). Residues 576 to 658 form the S1 motif domain; the sequence is AVEFDCEIAD…ETRSIVGNII (83 aa).

Belongs to the RNR ribonuclease family. RNase II subfamily.

The protein localises to the cytoplasm. It carries out the reaction Exonucleolytic cleavage in the 3'- to 5'-direction to yield nucleoside 5'-phosphates.. Its function is as follows. Involved in mRNA degradation. Hydrolyzes single-stranded polyribonucleotides processively in the 3' to 5' direction. This is Exoribonuclease 2 from Actinobacillus pleuropneumoniae serotype 7 (strain AP76).